A 239-amino-acid chain; its full sequence is Ribosomal RNA large subunit methyltransferase E (239 aa).

A disordered region spans residues 1 to 20 (MTKAPIAGNRTGRKLGQRVK). Over residues 11 to 20 (TGRKLGQRVK) the composition is skewed to basic residues. S-adenosyl-L-methionine contacts are provided by glycine 81, tryptophan 83, aspartate 104, aspartate 120, and aspartate 144. Residue lysine 184 is the Proton acceptor of the active site.

Belongs to the class I-like SAM-binding methyltransferase superfamily. RNA methyltransferase RlmE family.

The protein localises to the cytoplasm. The catalysed reaction is uridine(2552) in 23S rRNA + S-adenosyl-L-methionine = 2'-O-methyluridine(2552) in 23S rRNA + S-adenosyl-L-homocysteine + H(+). Its function is as follows. Specifically methylates the uridine in position 2552 of 23S rRNA at the 2'-O position of the ribose in the fully assembled 50S ribosomal subunit. This chain is Ribosomal RNA large subunit methyltransferase E, found in Rhizobium leguminosarum bv. trifolii (strain WSM2304).